Reading from the N-terminus, the 196-residue chain is uncharacterized protein (196 aa).

Positions 1–23 (MSARAPKELRLALPPCLLNRTFA) are cleaved as a signal peptide. 2 N-linked (GlcNAc...) asparagine glycosylation sites follow: Asn-19 and Asn-26. Topologically, residues 24 to 60 (SHNASGGSNAGIRSSGAGGGTCITQVGQQLFQSFSST) are extracellular. The helical transmembrane segment at 61–81 (LVLIVLVTLIFCLIVLSLSTF) threads the bilayer. Topologically, residues 82–196 (HIHKRRMKKR…EGLLQTVVLS (115 aa)) are cytoplasmic. Residues 93–184 (MQRAQEEYER…AHAASSCLDT (92 aa)) form a disordered region. 2 stretches are compositionally biased toward basic and acidic residues: residues 95–106 (RAQEEYERDHCS) and 124–135 (HGKETRLERQPR). A compositionally biased stretch (pro residues) spans 161-171 (CAPPPPPPVPS). The span at 172-181 (PHGAHAASSC) shows a compositional bias: low complexity.

Its subcellular location is the membrane. This is an uncharacterized protein from Rattus norvegicus (Rat).